The chain runs to 107 residues: Large ribosomal subunit protein uL24 (107 aa).

Belongs to the universal ribosomal protein uL24 family. Part of the 50S ribosomal subunit.

Functionally, one of two assembly initiator proteins, it binds directly to the 5'-end of the 23S rRNA, where it nucleates assembly of the 50S subunit. Its function is as follows. One of the proteins that surrounds the polypeptide exit tunnel on the outside of the subunit. This is Large ribosomal subunit protein uL24 from Thiobacillus denitrificans (strain ATCC 25259 / T1).